The sequence spans 163 residues: Nucleotide-binding protein BLi01194 (163 aa).

The protein belongs to the YajQ family.

Its function is as follows. Nucleotide-binding protein. In Bacillus licheniformis (strain ATCC 14580 / DSM 13 / JCM 2505 / CCUG 7422 / NBRC 12200 / NCIMB 9375 / NCTC 10341 / NRRL NRS-1264 / Gibson 46), this protein is Nucleotide-binding protein BLi01194.